The chain runs to 203 residues: Urease accessory protein UreG (203 aa).

12–19 (GPVGSGKT) contacts GTP.

This sequence belongs to the SIMIBI class G3E GTPase family. UreG subfamily. In terms of assembly, homodimer. UreD, UreF and UreG form a complex that acts as a GTP-hydrolysis-dependent molecular chaperone, activating the urease apoprotein by helping to assemble the nickel containing metallocenter of UreC. The UreE protein probably delivers the nickel.

The protein resides in the cytoplasm. Functionally, facilitates the functional incorporation of the urease nickel metallocenter. This process requires GTP hydrolysis, probably effectuated by UreG. The sequence is that of Urease accessory protein UreG from Nitrosococcus oceani (strain ATCC 19707 / BCRC 17464 / JCM 30415 / NCIMB 11848 / C-107).